The chain runs to 750 residues: Alpha-galactosidase C (750 aa).

Positions 1–26 are cleaved as a signal peptide; that stretch reads MFRSTATVAAATAMGLLTATGHGSLA. 8 N-linked (GlcNAc...) asparagine glycosylation sites follow: Asn58, Asn162, Asn186, Asn194, Asn366, Asn428, Asn432, and Asn453. Asp511 (nucleophile) is an active-site residue. The active-site Proton donor is Asp573.

This sequence belongs to the glycosyl hydrolase 36 family. In terms of assembly, homotetramer. Requires Mg(2+) as cofactor. The cofactor is NAD(+).

Its subcellular location is the secreted. It catalyses the reaction Hydrolysis of terminal, non-reducing alpha-D-galactose residues in alpha-D-galactosides, including galactose oligosaccharides, galactomannans and galactolipids.. Functionally, hydrolyzes a variety of simple alpha-D-galactoside as well as more complex molecules such as oligosaccharides and polysaccharides. Active on paranitrophenyl-alpha-galactoside, raffinose, locust bean gum and gum guar. The protein is Alpha-galactosidase C (aglC) of Emericella nidulans (strain FGSC A4 / ATCC 38163 / CBS 112.46 / NRRL 194 / M139) (Aspergillus nidulans).